The chain runs to 185 residues: MKTAQELRVGNVFMLGRDPMVVLKTEFTKSGRNSSVVKMKYKNLLTESPGEAVYKADDKFDIVVLEKKEVSYSYYASPMYVFMDAEFNQYEVEEETMSDVLSFLEDGMPCEVVFYNDKPISVEMPNSVVREIIYTEPAVKGDTSGKVMKSAKIVTGFELPVPLFCEIGDKIEIDTRTREYRSRVK.

This sequence belongs to the elongation factor P family.

Its subcellular location is the cytoplasm. It functions in the pathway protein biosynthesis; polypeptide chain elongation. Functionally, involved in peptide bond synthesis. Stimulates efficient translation and peptide-bond synthesis on native or reconstituted 70S ribosomes in vitro. Probably functions indirectly by altering the affinity of the ribosome for aminoacyl-tRNA, thus increasing their reactivity as acceptors for peptidyl transferase. This Nitrosomonas eutropha (strain DSM 101675 / C91 / Nm57) protein is Elongation factor P.